The sequence spans 616 residues: Sodium- and chloride-dependent transporter XTRP3 (616 aa).

Positions 1-11 (MRLAIKRRASR) are enriched in basic residues. The interval 1–26 (MRLAIKRRASRGQRPGPDEKRARDME) is disordered. The Cytoplasmic portion of the chain corresponds to 1–37 (MRLAIKRRASRGQRPGPDEKRARDMEKARPQWGNPLQ). Basic and acidic residues predominate over residues 16 to 26 (GPDEKRARDME). Residues 38 to 58 (FVFACISYAVGLGNVWRFPYL) form a helical membrane-spanning segment. Topologically, residues 59–66 (CQMYGGGS) are extracellular. Residues 67–87 (FLVPYLIMLIVEGMPLLYLEL) traverse the membrane as a helical segment. The Cytoplasmic portion of the chain corresponds to 88-103 (AVGQRMRQGSIGAWRT). A helical transmembrane segment spans residues 104–124 (ISPYLSGVGVASVVVSFFLSM). The Extracellular segment spans residues 125 to 189 (YYNVINAWGF…ISPSIQENGG (65 aa)). The N-linked (GlcNAc...) asparagine glycan is linked to N155. A helical membrane pass occupies residues 190 to 210 (VQWEPALCLTLAWLMVYLCIL). At 211 to 218 (RGTESTGK) the chain is on the cytoplasmic side. Residues 219–239 (VVYFTALMPYCVLIIYLVRGL) form a helical membrane-spanning segment. Residues 240–265 (TLHGATNGLMYMFTPKIEQLANPKAW) lie on the Extracellular side of the membrane. Residues 266–286 (INAATQIFFSLGLGFGSLIAF) form a helical membrane-spanning segment. Residues 287-300 (ASYNEPSNDCQKHA) lie on the Cytoplasmic side of the membrane. Residues 301-321 (VIVSVINSSTSIFASIVTFSI) traverse the membrane as a helical segment. Topologically, residues 322–413 (YGFKATFNYE…EAIKNMEVSQ (92 aa)) are extracellular. An N-linked (GlcNAc...) asparagine glycan is attached at N381. The helical transmembrane segment at 414-434 (LWSVLYFFMLLMLGMGSMLGN) threads the bilayer. Topologically, residues 435-455 (TAAILTPLTDSKVISSYLPKE) are cytoplasmic. The chain crosses the membrane as a helical span at residues 456 to 476 (AISGLVCLINCAVGMVFTMEA). Over 477–489 (GNYWFDIFNDYAA) the chain is Extracellular. A helical membrane pass occupies residues 490–510 (TLSLLLIVLVETIAVCYVYGL). Topologically, residues 511–533 (RRFESDLRAMTGRPLNWYWKAMW) are cytoplasmic. A helical transmembrane segment spans residues 534–554 (AFVSPLLIIGLFIFYLSDYIL). The Extracellular portion of the chain corresponds to 555–578 (TGTLQYQAWDATQGQLVTKDYPPH). A helical transmembrane segment spans residues 579-599 (ALAVIGLLVASSTMCIPLVAL). At 600-616 (GTFIRNRLKRGGSSPVA) the chain is on the cytoplasmic side.

Belongs to the sodium:neurotransmitter symporter (SNF) (TC 2.A.22) family. SLC6A20 subfamily. In terms of tissue distribution, highly expressed in epithelial cells of duodenum, jejunum, ileum, stomach, cecum, colon and kidney proximal tubule. Also expressed in the choroid plexus, microglia and meniges of the brain and in the ovary.

It is found in the apical cell membrane. The enzyme catalyses L-proline(out) + chloride(out) + 2 Na(+)(out) = L-proline(in) + chloride(in) + 2 Na(+)(in). The catalysed reaction is 4-hydroxy-L-proline(out) + chloride(out) + 2 Na(+)(out) = 4-hydroxy-L-proline(in) + chloride(in) + 2 Na(+)(in). It catalyses the reaction 2-methyl-2-(methylamino)propanoate(out) + chloride(out) + 2 Na(+)(out) = 2-methyl-2-(methylamino)propanoate(in) + chloride(in) + 2 Na(+)(in). It carries out the reaction L-pipecolate(out) + chloride(out) + 2 Na(+)(out) = L-pipecolate(in) + chloride(in) + 2 Na(+)(in). The enzyme catalyses glycine betaine(out) + chloride(out) + 2 Na(+)(out) = glycine betaine(in) + chloride(in) + 2 Na(+)(in). The catalysed reaction is glycine(out) + chloride(out) + 2 Na(+)(out) = glycine(in) + chloride(in) + 2 Na(+)(in). Functionally, mediates the Na(+)- and Cl(-)-dependent uptake of imino acids such as L-proline, N-methyl-L-proline and pipecolate as well as N-methylated amino acids. Also transports glycine, regulates proline and glycine homeostasis in the brain playing a role in the modulation of NMDAR currents. This chain is Sodium- and chloride-dependent transporter XTRP3, found in Rattus norvegicus (Rat).